Reading from the N-terminus, the 85-residue chain is Conotoxin Cap15a (85 aa).

Residues 1-23 form the signal peptide; sequence MEKLTFLILVATVLLTIHVLVQS. Residues 24 to 49 constitute a propeptide that is removed on maturation; sequence VGDKHLKRRPKQYATKHLSALMRGHR. Position 50 is a pyrrolidone carboxylic acid (Gln50).

It belongs to the conotoxin O2 superfamily. Post-translationally, contains 4 disulfide bonds. In terms of tissue distribution, expressed by the venom duct.

It localises to the secreted. This chain is Conotoxin Cap15a, found in Conus capitaneus (Captain cone).